A 205-amino-acid chain; its full sequence is Small ribosomal subunit protein uS4 (205 aa).

The segment covering 1 to 16 (MSKRESAKHKIDRRLG) has biased composition (basic and acidic residues). The interval 1–46 (MSKRESAKHKIDRRLGENIWGRPKSPVNRREYGPGQHGQRRKGKLS) is disordered. Residues 94-157 (SRLDAVVYRA…KQLAIVLEAV (64 aa)) enclose the S4 RNA-binding domain.

It belongs to the universal ribosomal protein uS4 family. In terms of assembly, part of the 30S ribosomal subunit. Contacts protein S5. The interaction surface between S4 and S5 is involved in control of translational fidelity.

Its function is as follows. One of the primary rRNA binding proteins, it binds directly to 16S rRNA where it nucleates assembly of the body of the 30S subunit. Functionally, with S5 and S12 plays an important role in translational accuracy. The chain is Small ribosomal subunit protein uS4 from Brucella abortus (strain S19).